A 156-amino-acid chain; its full sequence is Small ribosomal subunit protein uS11 (156 aa).

The tract at residues 1–27 is disordered; that stretch reads MSEKEQKEVEAKESSGKAEERRETREK.

It belongs to the universal ribosomal protein uS11 family. Part of the 30S ribosomal subunit.

Its function is as follows. Located on the platform of the 30S subunit. The protein is Small ribosomal subunit protein uS11 of Thermofilum pendens (strain DSM 2475 / Hrk 5).